Reading from the N-terminus, the 238-residue chain is Ankyrin repeat domain-containing protein 49 (238 aa).

At serine 48 the chain carries Phosphoserine. 4 ANK repeats span residues 77-105, 106-135, 139-168, and 172-205; these read LLWAAEKNRLTTVQRLLSERATHVNTRDE, DKYTPLHRAAYNGHLDVVRELIAHGADVHA, DGWTPLHSACKWNNARVASFLLQHDADVNA, and GLLTPLHLAAGNRDSKDTLELLLMNRYIKPGLKN.

It is found in the nucleus. Functionally, may have a role in spermatogenesis where it promotes autophagy in response to serum starvation, via the NF-kappaB pathway. The polypeptide is Ankyrin repeat domain-containing protein 49 (ANKRD49) (Bos taurus (Bovine)).